The primary structure comprises 251 residues: Cyclohexanol dehydrogenase (251 aa).

6 residues coordinate NAD(+): D42, N95, Y161, K165, I194, and T196. Y161 (proton acceptor) is an active-site residue.

Belongs to the short-chain dehydrogenases/reductases (SDR) family.

It catalyses the reaction cyclohexanol + NAD(+) = cyclohexanone + NADH + H(+). Catalyzes the oxidation of cyclohexanol to cyclohexanone. Required for the conversion of cyclohexanol to adipic acid. The polypeptide is Cyclohexanol dehydrogenase (Acinetobacter sp. (strain SE19)).